The sequence spans 423 residues: Carboxypeptidase B2 (423 aa).

Positions 1–22 (MKLCSLAVLVPIVLFCEQHVFA) are cleaved as a signal peptide. A propeptide spans 23–114 (FQSGQVLAAL…QISNDTVSPR (92 aa)) (activation peptide). Asparagine 44, asparagine 73, and asparagine 85 each carry an N-linked (GlcNAc...) asparagine glycan. Asparagine 108 is a glycosylation site (N-linked (GlcNAc...) (complex) asparagine). Residues 122–419 (QYHSLNEIYS…AAVSKIAWHV (298 aa)) form the Peptidase M14 domain. Cysteines 178 and 191 form a disulfide. 2 residues coordinate Zn(2+): histidine 181 and glutamate 184. Substrate contacts are provided by residues 181 to 184 (HARE) and arginine 239. N-linked (GlcNAc...) asparagine; partial glycosylation occurs at asparagine 241. Disulfide bonds link cysteine 250–cysteine 274 and cysteine 265–cysteine 279. 256 to 257 (NR) serves as a coordination point for substrate. A Zn(2+)-binding site is contributed by histidine 310. Residues 311-312 (SY) and tyrosine 363 each bind substrate. Glutamate 385 acts as the Proton donor/acceptor in catalysis.

This sequence belongs to the peptidase M14 family. It depends on Zn(2+) as a cofactor. In terms of processing, N-glycosylated. N-glycan at Asn-108: Hex5HexNAc4. As to expression, plasma; synthesized in the liver.

Its subcellular location is the secreted. It carries out the reaction Release of C-terminal Arg and Lys from a polypeptide.. TAFI/CPB2 is unique among carboxypeptidases in that it spontaneously inactivates with a short half-life, a property that is crucial for its role in controlling blood clot lysis. The zymogen is stabilized by interactions with the activation peptide. Release of the activation peptide increases a dynamic flap mobility and in time this leads to conformational changes that disrupt the catalytic site and expose a cryptic thrombin-cleavage site present at Arg-324. Cleaves C-terminal arginine or lysine residues from biologically active peptides such as kinins or anaphylatoxins in the circulation thereby regulating their activities. Down-regulates fibrinolysis by removing C-terminal lysine residues from fibrin that has already been partially degraded by plasmin. The polypeptide is Carboxypeptidase B2 (CPB2) (Homo sapiens (Human)).